The sequence spans 121 residues: Large ribosomal subunit protein uL14 (121 aa).

This sequence belongs to the universal ribosomal protein uL14 family. As to quaternary structure, part of the 50S ribosomal subunit. Forms a cluster with proteins L3 and L19. In the 70S ribosome, L14 and L19 interact and together make contacts with the 16S rRNA in bridges B5 and B8.

In terms of biological role, binds to 23S rRNA. Forms part of two intersubunit bridges in the 70S ribosome. The protein is Large ribosomal subunit protein uL14 of Phocaeicola vulgatus (strain ATCC 8482 / DSM 1447 / JCM 5826 / CCUG 4940 / NBRC 14291 / NCTC 11154) (Bacteroides vulgatus).